A 154-amino-acid chain; its full sequence is Anaerobic ribonucleoside-triphosphate reductase-activating protein (154 aa).

Cysteine 26, cysteine 30, and cysteine 33 together coordinate [4Fe-4S] cluster. Residues 32 to 34 (GCY) and glycine 74 each bind S-adenosyl-L-methionine.

The protein belongs to the organic radical-activating enzymes family. Forms a tetramer composed of two NrdD and two NrdG subunits. The cofactor is [4Fe-4S] cluster.

The protein localises to the cytoplasm. It carries out the reaction glycyl-[protein] + reduced [flavodoxin] + S-adenosyl-L-methionine = glycin-2-yl radical-[protein] + semiquinone [flavodoxin] + 5'-deoxyadenosine + L-methionine + H(+). Functionally, activation of anaerobic ribonucleoside-triphosphate reductase under anaerobic conditions by generation of an organic free radical, using S-adenosylmethionine and reduced flavodoxin as cosubstrates to produce 5'-deoxy-adenosine. This is Anaerobic ribonucleoside-triphosphate reductase-activating protein (nrdG) from Salmonella typhimurium (strain LT2 / SGSC1412 / ATCC 700720).